The sequence spans 160 residues: Cyclic pyranopterin monophosphate synthase (160 aa).

Residues 73–75 (LCH) and 110–111 (ME) contribute to the substrate site. The active site involves Asp125.

The protein belongs to the MoaC family. In terms of assembly, homohexamer; trimer of dimers.

The enzyme catalyses (8S)-3',8-cyclo-7,8-dihydroguanosine 5'-triphosphate = cyclic pyranopterin phosphate + diphosphate. It functions in the pathway cofactor biosynthesis; molybdopterin biosynthesis. Catalyzes the conversion of (8S)-3',8-cyclo-7,8-dihydroguanosine 5'-triphosphate to cyclic pyranopterin monophosphate (cPMP). This chain is Cyclic pyranopterin monophosphate synthase, found in Pseudomonas paraeruginosa (strain DSM 24068 / PA7) (Pseudomonas aeruginosa (strain PA7)).